We begin with the raw amino-acid sequence, 637 residues long: DNA gyrase subunit B (637 aa).

A Toprim domain is found at 420–534; that stretch reads CEIYIVEGDS…EGHVFIAQPP (115 aa). The Mg(2+) site is built by E426, D499, and D501.

The protein belongs to the type II topoisomerase GyrB family. Heterotetramer, composed of two GyrA and two GyrB chains. In the heterotetramer, GyrA contains the active site tyrosine that forms a transient covalent intermediate with DNA, while GyrB binds cofactors and catalyzes ATP hydrolysis. Mg(2+) is required as a cofactor. Requires Mn(2+) as cofactor. It depends on Ca(2+) as a cofactor.

It localises to the cytoplasm. It carries out the reaction ATP-dependent breakage, passage and rejoining of double-stranded DNA.. In terms of biological role, a type II topoisomerase that negatively supercoils closed circular double-stranded (ds) DNA in an ATP-dependent manner to modulate DNA topology and maintain chromosomes in an underwound state. Negative supercoiling favors strand separation, and DNA replication, transcription, recombination and repair, all of which involve strand separation. Also able to catalyze the interconversion of other topological isomers of dsDNA rings, including catenanes and knotted rings. Type II topoisomerases break and join 2 DNA strands simultaneously in an ATP-dependent manner. The sequence is that of DNA gyrase subunit B from Clostridium acetobutylicum (strain ATCC 824 / DSM 792 / JCM 1419 / IAM 19013 / LMG 5710 / NBRC 13948 / NRRL B-527 / VKM B-1787 / 2291 / W).